The chain runs to 2198 residues: Activating signal cointegrator 1 complex subunit 3 (2198 aa).

S12 is subject to Phosphoserine. Coiled coils occupy residues 18-81 (KQDN…KQIV) and 328-356 (IQSE…KAGE). Residues 487–670 (ETAYNTNENM…FLHVNPYIGL (184 aa)) enclose the Helicase ATP-binding 1 domain. 500–507 (APTGAGKT) serves as a coordination point for ATP. Position 573 is an N6-acetyllysine (K573). The short motif at 612–615 (DEVH) is the DEVH box element. In terms of domain architecture, Helicase C-terminal 1 spans 697-915 (QLNNMDEVCY…GTVTNVEEAV (219 aa)). The SEC63 1 domain occupies 979–1288 (STDLGRTASH…GAEAVCIINF (310 aa)). Residues 1337 to 1512 (HTLYHTDCNV…WLNIKQMGLF (176 aa)) form the Helicase ATP-binding 2 domain. Residue 1350 to 1357 (APTGSGKT) coordinates ATP. The short motif at 1454 to 1457 (DEIH) is the DEIH box element. The Helicase C-terminal 2 domain occupies 1545–1740 (PAFQAIRSHS…VLSDHLNAEI (196 aa)). Residues 1813 to 2177 (PLTCGRIASY…LGLDQQYDIY (365 aa)) form the SEC63 2 domain.

The protein belongs to the helicase family. In terms of assembly, identified in the ASCC complex that contains ASCC1, ASCC2 and ASCC3. Functions as a scaffolding subunit that interacts directly with both ASCC1 and ASCC2. Interacts directly with ALKBH3, and thereby recruits ALKBH3 to the ASCC complex. Part of the ASC-1/TRIP4 complex, that contains TRIP4, ASCC1, ASCC2 and ASCC3. Part of the RQT (ribosome quality control trigger) complex, that contains ASCC2, ASCC3 and TRIP4. Associates with ribosomes; recruited to collided ribosomes. Interacts with ZCCHC4. Interacts with ZNF598. Interacts with RPS3.

Its subcellular location is the nucleus. It is found in the nucleus speckle. The protein localises to the cytoplasm. The protein resides in the cytosol. The enzyme catalyses Couples ATP hydrolysis with the unwinding of duplex DNA by translocating in the 3'-5' direction.. The catalysed reaction is ATP + H2O = ADP + phosphate + H(+). ATPase involved both in DNA repair and rescue of stalled ribosomes. 3'-5' DNA helicase involved in repair of alkylated DNA: promotes DNA unwinding to generate single-stranded substrate needed for ALKBH3, enabling ALKBH3 to process alkylated N3-methylcytosine (3mC) within double-stranded regions. Also involved in activation of the ribosome quality control (RQC) pathway, a pathway that degrades nascent peptide chains during problematic translation. Drives the splitting of stalled ribosomes that are ubiquitinated in a ZNF598-dependent manner, as part of the ribosome quality control trigger (RQT) complex. Part of the ASC-1 complex that enhances NF-kappa-B, SRF and AP1 transactivation. In Mus musculus (Mouse), this protein is Activating signal cointegrator 1 complex subunit 3 (Ascc3).